A 453-amino-acid chain; its full sequence is Tryptophan biosynthesis protein TrpCF (453 aa).

The interval 1 to 257 (MQDTTLKKII…TAVRSIIFGD (257 aa)) is indole-3-glycerol phosphate synthase. The N-(5'-phosphoribosyl)anthranilate isomerase stretch occupies residues 258–453 (NKVCGLTRSI…KSIFQKLRYG (196 aa)).

The protein in the N-terminal section; belongs to the TrpC family. This sequence in the C-terminal section; belongs to the TrpF family. In terms of assembly, monomer.

It carries out the reaction N-(5-phospho-beta-D-ribosyl)anthranilate = 1-(2-carboxyphenylamino)-1-deoxy-D-ribulose 5-phosphate. The catalysed reaction is 1-(2-carboxyphenylamino)-1-deoxy-D-ribulose 5-phosphate + H(+) = (1S,2R)-1-C-(indol-3-yl)glycerol 3-phosphate + CO2 + H2O. It participates in amino-acid biosynthesis; L-tryptophan biosynthesis; L-tryptophan from chorismate: step 3/5. It functions in the pathway amino-acid biosynthesis; L-tryptophan biosynthesis; L-tryptophan from chorismate: step 4/5. Functionally, bifunctional enzyme that catalyzes two sequential steps of tryptophan biosynthetic pathway. The first reaction is catalyzed by the isomerase, coded by the TrpF domain; the second reaction is catalyzed by the synthase, coded by the TrpC domain. In Buchnera aphidicola subsp. Acyrthosiphon pisum (strain APS) (Acyrthosiphon pisum symbiotic bacterium), this protein is Tryptophan biosynthesis protein TrpCF (trpC).